Reading from the N-terminus, the 339-residue chain is NADH-quinone oxidoreductase subunit H (339 aa).

9 helical membrane passes run Ile9 to Cys29, Pro50 to Phe70, Ile82 to Ile102, Val115 to Gly135, Met161 to Ile181, Met187 to Leu207, Met235 to Thr255, Ile275 to Ile295, and Gly311 to Val331.

Belongs to the complex I subunit 1 family. In terms of assembly, NDH-1 is composed of 14 different subunits. Subunits NuoA, H, J, K, L, M, N constitute the membrane sector of the complex.

The protein localises to the cell inner membrane. The catalysed reaction is a quinone + NADH + 5 H(+)(in) = a quinol + NAD(+) + 4 H(+)(out). In terms of biological role, NDH-1 shuttles electrons from NADH, via FMN and iron-sulfur (Fe-S) centers, to quinones in the respiratory chain. The immediate electron acceptor for the enzyme in this species is believed to be ubiquinone. Couples the redox reaction to proton translocation (for every two electrons transferred, four hydrogen ions are translocated across the cytoplasmic membrane), and thus conserves the redox energy in a proton gradient. This subunit may bind ubiquinone. The polypeptide is NADH-quinone oxidoreductase subunit H (Rickettsia felis (strain ATCC VR-1525 / URRWXCal2) (Rickettsia azadi)).